A 592-amino-acid chain; its full sequence is Salivary peroxidase/catechol oxidase (592 aa).

Positions 1–21 (MWMFLKLLLFVCSSWWSCAQA) are cleaved as a signal peptide. C24 and C37 form a disulfide bridge. A glycan (N-linked (GlcNAc...) asparagine) is linked at N25. The active-site Proton acceptor is H110. Positions 111, 187, 189, 191, and 193 each coordinate Ca(2+). The N-linked (GlcNAc...) asparagine glycan is linked to N230. C235 and C244 are oxidised to a cystine. H353 is a heme b binding site. N-linked (GlcNAc...) asparagine glycosylation is present at N366. 2 disulfides stabilise this stretch: C452-C509 and C553-C580.

Belongs to the peroxidase family. XPO subfamily. Female salivary gland.

The protein resides in the secreted. The catalysed reaction is 2 catechol + O2 = 2 1,2-benzoquinone + 2 H2O. Functionally, inhibits noradrenaline-induced smooth muscle contraction in the host, probably due to the oxidation of noradrenaline, resulting in vasodilation. Exhibits peroxidase activity. The chain is Salivary peroxidase/catechol oxidase from Anopheles albimanus (New world malaria mosquito).